A 150-amino-acid polypeptide reads, in one-letter code: D-aminoacyl-tRNA deacylase (150 aa).

Positions 137-138 (GP) match the Gly-cisPro motif, important for rejection of L-amino acids motif.

It belongs to the DTD family. As to quaternary structure, homodimer.

The protein localises to the cytoplasm. It catalyses the reaction glycyl-tRNA(Ala) + H2O = tRNA(Ala) + glycine + H(+). The enzyme catalyses a D-aminoacyl-tRNA + H2O = a tRNA + a D-alpha-amino acid + H(+). Its function is as follows. An aminoacyl-tRNA editing enzyme that deacylates mischarged D-aminoacyl-tRNAs. Also deacylates mischarged glycyl-tRNA(Ala), protecting cells against glycine mischarging by AlaRS. Acts via tRNA-based rather than protein-based catalysis; rejects L-amino acids rather than detecting D-amino acids in the active site. By recycling D-aminoacyl-tRNA to D-amino acids and free tRNA molecules, this enzyme counteracts the toxicity associated with the formation of D-aminoacyl-tRNA entities in vivo and helps enforce protein L-homochirality. This is D-aminoacyl-tRNA deacylase from Listeria innocua serovar 6a (strain ATCC BAA-680 / CLIP 11262).